A 161-amino-acid polypeptide reads, in one-letter code: Cytochrome c-type biogenesis protein CcmE (161 aa).

Residues 1-8 (MNPRRKKR) lie on the Cytoplasmic side of the membrane. Residues 9 to 29 (LGIVLAIFIGISATIGLMLYA) traverse the membrane as a helical; Signal-anchor for type II membrane protein segment. The Periplasmic portion of the chain corresponds to 30-161 (LNQNMDLFYT…SSEQKQGSGE (132 aa)). His129 and Tyr133 together coordinate heme. The segment at 142 to 161 (MKKTHEPLQYSSEQKQGSGE) is disordered. Residues 150-161 (QYSSEQKQGSGE) are compositionally biased toward polar residues.

Belongs to the CcmE/CycJ family.

It is found in the cell inner membrane. In terms of biological role, heme chaperone required for the biogenesis of c-type cytochromes. Transiently binds heme delivered by CcmC and transfers the heme to apo-cytochromes in a process facilitated by CcmF and CcmH. This is Cytochrome c-type biogenesis protein CcmE from Vibrio parahaemolyticus serotype O3:K6 (strain RIMD 2210633).